Reading from the N-terminus, the 308-residue chain is uncharacterized protein (308 aa).

Residues 19–43 (EPQASGAGPAQTPPPVTVPMTPPSK) are disordered. Pro residues predominate over residues 29–43 (QTPPPVTVPMTPPSK).

This is an uncharacterized protein from Deinococcus radiodurans (strain ATCC 13939 / DSM 20539 / JCM 16871 / CCUG 27074 / LMG 4051 / NBRC 15346 / NCIMB 9279 / VKM B-1422 / R1).